The primary structure comprises 287 residues: Acetylglutamate kinase (287 aa).

Residues 70–71 (GG), arginine 92, and asparagine 184 each bind substrate.

It belongs to the acetylglutamate kinase family. ArgB subfamily.

The protein resides in the cytoplasm. It catalyses the reaction N-acetyl-L-glutamate + ATP = N-acetyl-L-glutamyl 5-phosphate + ADP. It functions in the pathway amino-acid biosynthesis; L-arginine biosynthesis; N(2)-acetyl-L-ornithine from L-glutamate: step 2/4. Functionally, catalyzes the ATP-dependent phosphorylation of N-acetyl-L-glutamate. The sequence is that of Acetylglutamate kinase from Ruegeria pomeroyi (strain ATCC 700808 / DSM 15171 / DSS-3) (Silicibacter pomeroyi).